Consider the following 305-residue polypeptide: Porphobilinogen deaminase (305 aa).

S-(dipyrrolylmethanemethyl)cysteine is present on C241.

This sequence belongs to the HMBS family. Monomer. Requires dipyrromethane as cofactor.

It catalyses the reaction 4 porphobilinogen + H2O = hydroxymethylbilane + 4 NH4(+). It participates in porphyrin-containing compound metabolism; protoporphyrin-IX biosynthesis; coproporphyrinogen-III from 5-aminolevulinate: step 2/4. Its function is as follows. Tetrapolymerization of the monopyrrole PBG into the hydroxymethylbilane pre-uroporphyrinogen in several discrete steps. The polypeptide is Porphobilinogen deaminase (Exiguobacterium sp. (strain ATCC BAA-1283 / AT1b)).